Consider the following 356-residue polypeptide: MNFPQAIIDASALRHNLQRVRELAPRSQIMAVVKADGYGHGLTRVADVLVAADAFAVARLEEATALRQAGHRCPVVLLGGISDKEQLQLAAAHRLTLVVHEFAQLDLLERVRITSPLPVWVKADTGMHRLGFPPQVVAKAIARLRCCPAVASVVGLMSHLASADESEDFLTPIQLQTFEGIAAPGLLRSMANSAAVMVYPYAHFDWVRPGLMLYGASPFAHGTGAAVGLKSVMTLQTRLIAIHHLRPGDSIGYGATWVCPEAMTVGVAALGYGDGYPRHAVSGTPVLVNGRPVPLVGRVSMDMITLDLRTQPKAKVGDPVIAWGPNLPVEEVARHATTIPYELLCQVTGRVPRTME.

Lys34 serves as the catalytic Proton acceptor; specific for D-alanine. The residue at position 34 (Lys34) is an N6-(pyridoxal phosphate)lysine. Arg129 contributes to the substrate binding site. Tyr253 functions as the Proton acceptor; specific for L-alanine in the catalytic mechanism. Met301 contacts substrate.

This sequence belongs to the alanine racemase family. Pyridoxal 5'-phosphate is required as a cofactor.

It carries out the reaction L-alanine = D-alanine. It functions in the pathway amino-acid biosynthesis; D-alanine biosynthesis; D-alanine from L-alanine: step 1/1. Its function is as follows. Catalyzes the interconversion of L-alanine and D-alanine. May also act on other amino acids. The protein is Alanine racemase (alr) of Nitrosococcus oceani (strain ATCC 19707 / BCRC 17464 / JCM 30415 / NCIMB 11848 / C-107).